The primary structure comprises 297 residues: MSPTPPRSKFPLPLDAVVQRKPAPARTAGMPAVGAPGPAQAQAKARDKQPSAPTAAASAVEARASAATAGGGGMASDRARGALAARLRASGIRDERVLAAIGTVPRHLFVEPGLASQAYEDAALPIGHQQTISKPSVVARMIELLREGLSADTPVERVLEIGTGCGYQAAVLSLVAREVFSIERIRPLHEQAKANLRPLRVPNLRLHYGDGMLGLPQAAPFSAIILAAAGMEVPQALLEQLAIGGRLIAPVAVVPPAGGSGQTVTQQLLLIERLNRHRFHRTALEAVFFVPLKSGTI.

The tract at residues 20 to 57 (RKPAPARTAGMPAVGAPGPAQAQAKARDKQPSAPTAAA) is disordered. Positions 28–43 (AGMPAVGAPGPAQAQA) are enriched in low complexity. Ser-133 is a catalytic residue.

It belongs to the methyltransferase superfamily. L-isoaspartyl/D-aspartyl protein methyltransferase family.

Its subcellular location is the cytoplasm. It catalyses the reaction [protein]-L-isoaspartate + S-adenosyl-L-methionine = [protein]-L-isoaspartate alpha-methyl ester + S-adenosyl-L-homocysteine. Catalyzes the methyl esterification of L-isoaspartyl residues in peptides and proteins that result from spontaneous decomposition of normal L-aspartyl and L-asparaginyl residues. It plays a role in the repair and/or degradation of damaged proteins. This is Protein-L-isoaspartate O-methyltransferase from Cupriavidus pinatubonensis (strain JMP 134 / LMG 1197) (Cupriavidus necator (strain JMP 134)).